A 1165-amino-acid chain; its full sequence is Chromosome partition protein Smc (1165 aa).

ATP is bound at residue 32–39; the sequence is PNGSGKSN. A coiled-coil region spans residues 161-503; the sequence is AGVAEFDRKI…ETQRQVWREA (343 aa). One can recognise an SMC hinge domain in the interval 518 to 630; that stretch reads QGVHGLISQL…VFRSLELARR (113 aa). Coiled coils occupy residues 672 to 901 and 946 to 1010; these read ELAE…LQQR and DLSL…DCDT.

Belongs to the SMC family. In terms of assembly, homodimer.

The protein resides in the cytoplasm. Its function is as follows. Required for chromosome condensation and partitioning. The sequence is that of Chromosome partition protein Smc from Gloeobacter violaceus (strain ATCC 29082 / PCC 7421).